The primary structure comprises 96 residues: Co-chaperonin GroES (96 aa).

Belongs to the GroES chaperonin family. Heptamer of 7 subunits arranged in a ring. Interacts with the chaperonin GroEL.

The protein resides in the cytoplasm. In terms of biological role, together with the chaperonin GroEL, plays an essential role in assisting protein folding. The GroEL-GroES system forms a nano-cage that allows encapsulation of the non-native substrate proteins and provides a physical environment optimized to promote and accelerate protein folding. GroES binds to the apical surface of the GroEL ring, thereby capping the opening of the GroEL channel. This Polynucleobacter asymbioticus (strain DSM 18221 / CIP 109841 / QLW-P1DMWA-1) (Polynucleobacter necessarius subsp. asymbioticus) protein is Co-chaperonin GroES.